The following is a 645-amino-acid chain: Nucleolar GTP-binding protein 1 (645 aa).

Positions 168 to 340 (RTLLICGYPN…VRNKACEKLL (173 aa)) constitute an OBG-type G domain. Residues 174–181 (GYPNVGKS), 220–224 (DTPGI), and 288–291 (NKTD) each bind GTP. Residues 567–645 (GQNDSMASGS…KRGIGKSDFR (79 aa)) form a disordered region. Residues 612-624 (NRDARQGEADRHA) show a composition bias toward basic and acidic residues.

This sequence belongs to the TRAFAC class OBG-HflX-like GTPase superfamily. OBG GTPase family. NOG subfamily.

It is found in the nucleus. Its subcellular location is the nucleolus. In terms of biological role, involved in the biogenesis of the 60S ribosomal subunit. The polypeptide is Nucleolar GTP-binding protein 1 (NOG1) (Candida glabrata (strain ATCC 2001 / BCRC 20586 / JCM 3761 / NBRC 0622 / NRRL Y-65 / CBS 138) (Yeast)).